The following is an 807-amino-acid chain: Glycerol-3-phosphate acyltransferase (807 aa).

An HXXXXD motif motif is present at residues 305 to 310 (CHRSHM).

It belongs to the GPAT/DAPAT family.

The protein localises to the cell inner membrane. It carries out the reaction sn-glycerol 3-phosphate + an acyl-CoA = a 1-acyl-sn-glycero-3-phosphate + CoA. It participates in phospholipid metabolism; CDP-diacylglycerol biosynthesis; CDP-diacylglycerol from sn-glycerol 3-phosphate: step 1/3. This is Glycerol-3-phosphate acyltransferase from Vibrio atlanticus (strain LGP32) (Vibrio splendidus (strain Mel32)).